Reading from the N-terminus, the 201-residue chain is 7-methyl-GTP pyrophosphatase (201 aa).

Asp73 functions as the Proton acceptor in the catalytic mechanism.

It belongs to the Maf family. YceF subfamily. The cofactor is a divalent metal cation.

It is found in the cytoplasm. It catalyses the reaction N(7)-methyl-GTP + H2O = N(7)-methyl-GMP + diphosphate + H(+). Functionally, nucleoside triphosphate pyrophosphatase that hydrolyzes 7-methyl-GTP (m(7)GTP). May have a dual role in cell division arrest and in preventing the incorporation of modified nucleotides into cellular nucleic acids. The sequence is that of 7-methyl-GTP pyrophosphatase from Thiobacillus denitrificans (strain ATCC 25259 / T1).